Consider the following 1481-residue polypeptide: Neuropathy target esterase sws (1481 aa).

Topologically, residues 1 to 34 (MDVLELLRASANGCYNTIFSDAWSQYVSQQITSS) are lumenal. A helical transmembrane segment spans residues 35-55 (LYLYIALGILTVLFVAWFIYF). Over 56–1481 (KRLARLRLRD…KENKNVNTKN (1426 aa)) the chain is Cytoplasmic. 175-302 (IFGHFEKPVF…IRVIQVIMIR (128 aa)) contributes to the a nucleoside 3',5'-cyclic phosphate binding site. The tract at residues 336-420 (HLNSQSQSSQ…NNVQLPEVHG (85 aa)) is disordered. Low complexity-rich tracts occupy residues 339-379 (SQSQ…LPLQ) and 401-412 (SGPNPNPNSGNN). S448 carries the phosphoserine modification. Residues 492–624 (ELGL…VVRR) and 613–740 (IVLD…LSHR) contribute to the a nucleoside 3',5'-cyclic phosphate site. The PNPLA domain occupies 967–1133 (LVLGGGGARG…VNNLPGHLWR (167 aa)). Positions 971-976 (GGGARG) match the GXGXXG motif. The short motif at 998–1002 (GVSIG) is the GXSXG element. Catalysis depends on S1000, which acts as the Nucleophile. The Proton acceptor role is filled by D1120. The short motif at 1120–1122 (DGG) is the DGA/G element. Position 1214 is a phosphoserine (S1214). Positions 1366–1481 (LSLSEAEMDS…KENKNVNTKN (116 aa)) are disordered. 2 stretches are compositionally biased toward basic and acidic residues: residues 1379-1390 (IDFRSDSKKDKA) and 1400-1410 (KDNEDKTDAVD). A compositionally biased stretch (low complexity) spans 1445–1457 (TNTMTTQTTSPTT).

The protein belongs to the NTE family. Interacts with Pka-C3; interaction inhibits the catalytic function of Pka-C3 and the esterase activity of sws.

The protein resides in the endoplasmic reticulum membrane. The catalysed reaction is a 1-acyl-sn-glycero-3-phosphocholine + H2O = sn-glycerol 3-phosphocholine + a fatty acid + H(+). In terms of biological role, phospholipase B that deacylates intracellular phosphatidylcholine (PtdCho), generating glycerophosphocholine (GroPtdCho). This deacylation occurs at both sn-2 and sn-1 positions of PtdCho. Its specific chemical modification by certain organophosphorus (OP) compounds leads to distal axonopathy. Plays a role in the signaling mechanism between neurons and glia that regulates glia wrapping during development of the adult brain. Essential for membrane lipid homeostasis and cell survival in both neurons and glia of the adult brain. The chain is Neuropathy target esterase sws from Drosophila willistoni (Fruit fly).